Here is a 256-residue protein sequence, read N- to C-terminus: Low molecular mass lipoprotein 3 (256 aa).

The first 17 residues, 1–17, serve as a signal peptide directing secretion; sequence MKPAIVILCLFVASLYA.

This sequence belongs to the 30 kDa lipoprotein family. In terms of tissue distribution, detected in larval hemolymph (at protein level).

Its subcellular location is the secreted. The chain is Low molecular mass lipoprotein 3 from Bombyx mori (Silk moth).